Here is a 192-residue protein sequence, read N- to C-terminus: NF-kappa-B inhibitor-interacting Ras-like protein 1 (192 aa).

11–18 (GLLSVGKT) is a binding site for GTP. Positions 35–43 (DCETLEDVY) match the Effector region motif. Residues 58–93 (HLYDTRGLQKGVELPKHYFSFADGFVLVYSVNNLES) form an interactions with NFKBIA and NFKBIB region. GTP contacts are provided by residues 61-65 (DTRGL) and 120-123 (NKLD). The interval 168–192 (LSQPQSKSSFPLPGRKNKGNSNPEN) is disordered.

This sequence belongs to the small GTPase superfamily. Ras family. KappaB-Ras subfamily. In terms of assembly, interacts with both NF-kappa-B inhibitor alpha (NFKBIA) and beta (NFKBIB) in vitro. However, it probably only interacts with NFKBIB in vivo. Forms a complex with NFKBIB and NF-kappa-B heterodimer (p50/NFKB1 and p65/RELA). Also interacts with c-Rel (REL).

Its subcellular location is the cytoplasm. In terms of biological role, atypical Ras-like protein that acts as a potent regulator of NF-kappa-B activity by preventing the degradation of NF-kappa-B inhibitor beta (NFKBIB) by most signals, explaining why NFKBIB is more resistant to degradation. May act by blocking phosphorylation of NFKBIB and mediating cytoplasmic retention of p65/RELA NF-kappa-B subunit. It is unclear whether it acts as a GTPase. Both GTP- and GDP-bound forms block phosphorylation of NFKBIB. The polypeptide is NF-kappa-B inhibitor-interacting Ras-like protein 1 (Nkiras1) (Mus musculus (Mouse)).